The following is a 697-amino-acid chain: Potassium-transporting ATPase ATP-binding subunit (697 aa).

4 helical membrane-spanning segments follow: residues 55–75 (PIMF…FLPS), 79–99 (SIPG…VLFA), 245–265 (LTLI…YLGF), and 271–291 (VLVA…LSAI). The active-site 4-aspartylphosphate intermediate is the D324. Residues D361, E365, 393-400 (FKAETRMS), and K412 contribute to the ATP site. Residues D535 and D539 each coordinate Mg(2+). 3 helical membrane passes run 605 to 625 (FAII…LNIM), 633 to 653 (AILS…PLAM), and 677 to 697 (GGVI…GLFI).

It belongs to the cation transport ATPase (P-type) (TC 3.A.3) family. Type IA subfamily. As to quaternary structure, the system is composed of three essential subunits: KdpA, KdpB and KdpC.

The protein resides in the cell membrane. It catalyses the reaction K(+)(out) + ATP + H2O = K(+)(in) + ADP + phosphate + H(+). Its function is as follows. Part of the high-affinity ATP-driven potassium transport (or Kdp) system, which catalyzes the hydrolysis of ATP coupled with the electrogenic transport of potassium into the cytoplasm. This subunit is responsible for energy coupling to the transport system and for the release of the potassium ions to the cytoplasm. This is Potassium-transporting ATPase ATP-binding subunit from Bacillus cereus (strain G9842).